The chain runs to 214 residues: MTVNTQLNYQVYNWEGQVSGNADLNLKVSQDSGMYLVHRALVKQSNEKRQGSANTKTRSEVRGGGRKPWRQKGTGRARAGSIRSPLWRGGGVIFGPKPRSFTKKMNKKERQLALRTALNNKSVNTLIVENFNSYFHQPKTKLFMEAIHRWNLDLNKKVLVIVDKKDPNVYLSIRNLHNVELISADTLNIMALLAAHKIIITVDALSKIQEVYNG.

The tract at residues 42–81 (VKQSNEKRQGSANTKTRSEVRGGGRKPWRQKGTGRARAGS) is disordered. The segment covering 64–75 (GGRKPWRQKGTG) has biased composition (basic residues).

Belongs to the universal ribosomal protein uL4 family. In terms of assembly, part of the 50S ribosomal subunit.

The protein localises to the plastid. Its subcellular location is the chloroplast. Its function is as follows. Probably binds the 23S rRNA. In Pyropia yezoensis (Susabi-nori), this protein is Large ribosomal subunit protein uL4c (rpl4).